Consider the following 577-residue polypeptide: MTRLTREHYAKLYGPTTGDRIRLADTDLIIEITEDRCGGPGLAGEEAVFGGGKVLRESMGQSRLTRAGGAPDTVITGAIIIDHWGIIKADIGIRDGRIVGIGKAGNPDIMDGVDPALIVGPSTEIIAGNNRIVTAGGIDCHVHFICPQILPEALSGGITTMIGGGTGPAEGSKATTVTPGAWHLGRMLQALDGWPMNILMLGKGNTVNPDAMWEQLRGGAAGFKLHEDWGTTPAVIDACLRVADEADVQVALHSDTLNETGFVEGTLAAIGGRAIHAYHTEGAGGGHAPDIITVASHPNVMPSSTNPTRPHTVNTLDEHLDMLMVCHHLNAAVPEDLAFAESRIRPSTIAAEDLLHDIGAISMIGSDSQAMGRIGEVVMRTWQTAHVMKKRRGALPGDPSGPNGNDNNRVRRYVAKYTICPAITHGIDHEIGSVEVGKLADLVLWEPAFFGVRPHAVIKGGGIVWAAMGDANASIPTPQPVFPRPMFSAMHAVAAGLAVHFVSPTAIEDDLAARLALRRRLVPTRDVRNRGKADLPLNDAMPDIRVDPDTFTVRIDGEVWEEHPAAELPMAQRYFLF.

The region spanning 136–577 (GGIDCHVHFI…LPMAQRYFLF (442 aa)) is the Urease domain. H141, H143, and K224 together coordinate Ni(2+). K224 bears the N6-carboxylysine mark. H226 serves as a coordination point for substrate. Residues H253 and H279 each coordinate Ni(2+). The active-site Proton donor is the H327. Residue D367 participates in Ni(2+) binding.

The protein belongs to the metallo-dependent hydrolases superfamily. Urease alpha subunit family. Heterotrimer of UreA (gamma), UreB (beta) and UreC (alpha) subunits. Three heterotrimers associate to form the active enzyme. Ni cation serves as cofactor. Carboxylation allows a single lysine to coordinate two nickel ions.

It is found in the cytoplasm. It carries out the reaction urea + 2 H2O + H(+) = hydrogencarbonate + 2 NH4(+). The protein operates within nitrogen metabolism; urea degradation; CO(2) and NH(3) from urea (urease route): step 1/1. The protein is Urease subunit alpha of Mycobacteroides abscessus (strain ATCC 19977 / DSM 44196 / CCUG 20993 / CIP 104536 / JCM 13569 / NCTC 13031 / TMC 1543 / L948) (Mycobacterium abscessus).